Reading from the N-terminus, the 670-residue chain is DNA ligase (670 aa).

NAD(+)-binding positions include 36-40 (DEEYD), 84-85 (SL), and E116. Residue K118 is the N6-AMP-lysine intermediate of the active site. The NAD(+) site is built by R139, E177, K293, and K317. Zn(2+) is bound by residues C411, C414, C429, and C434. In terms of domain architecture, BRCT spans 594 to 670 (KKPSPLKGLT…SYEEFLKMLE (77 aa)).

It belongs to the NAD-dependent DNA ligase family. LigA subfamily. Requires Mg(2+) as cofactor. Mn(2+) serves as cofactor.

The catalysed reaction is NAD(+) + (deoxyribonucleotide)n-3'-hydroxyl + 5'-phospho-(deoxyribonucleotide)m = (deoxyribonucleotide)n+m + AMP + beta-nicotinamide D-nucleotide.. Its function is as follows. DNA ligase that catalyzes the formation of phosphodiester linkages between 5'-phosphoryl and 3'-hydroxyl groups in double-stranded DNA using NAD as a coenzyme and as the energy source for the reaction. It is essential for DNA replication and repair of damaged DNA. This is DNA ligase from Thermodesulfovibrio yellowstonii (strain ATCC 51303 / DSM 11347 / YP87).